The following is a 204-amino-acid chain: Large ribosomal subunit protein uL4 (204 aa).

The disordered stretch occupies residues Lys-44–Gly-76.

Belongs to the universal ribosomal protein uL4 family. In terms of assembly, part of the 50S ribosomal subunit.

Its function is as follows. One of the primary rRNA binding proteins, this protein initially binds near the 5'-end of the 23S rRNA. It is important during the early stages of 50S assembly. It makes multiple contacts with different domains of the 23S rRNA in the assembled 50S subunit and ribosome. Functionally, forms part of the polypeptide exit tunnel. The polypeptide is Large ribosomal subunit protein uL4 (Clostridium perfringens (strain ATCC 13124 / DSM 756 / JCM 1290 / NCIMB 6125 / NCTC 8237 / Type A)).